The following is an 89-amino-acid chain: HssA/B-like protein 14 (89 aa).

The protein belongs to the hssA/B family.

The polypeptide is HssA/B-like protein 14 (hssl14) (Dictyostelium discoideum (Social amoeba)).